The chain runs to 293 residues: uncharacterized protein (293 aa).

The helical transmembrane segment at 55–77 (IVLAKEIFAVAFFSLGMSCLLMA) threads the bilayer.

The protein resides in the membrane. This is an uncharacterized protein from Caenorhabditis elegans.